We begin with the raw amino-acid sequence, 240 residues long: Extracellular superoxide dismutase [Cu-Zn] (240 aa).

The signal sequence occupies residues 1-18 (MLALLCSCLLLAAGASDA). Intrachain disulfides connect Cys63–Cys208 and Cys125–Cys207. N-linked (GlcNAc...) asparagine glycosylation is present at Asn107. The Cu cation site is built by His114, His116, and His131. His131, His139, His142, and Asp145 together coordinate Zn(2+). His181 contacts Cu cation. 2 N-linked (Glc) (glycation) lysine; in vitro glycosylation sites follow: Lys229 and Lys230.

The protein belongs to the Cu-Zn superoxide dismutase family. As to quaternary structure, homotetramer. Directly interacts with ATP7A; this interaction is copper-dependent and is required for SOD3 activity. Cu cation serves as cofactor. Zn(2+) is required as a cofactor. In terms of tissue distribution, expressed in blood vessels, heart, lung, kidney and placenta. Major SOD isoenzyme in extracellular fluids such as plasma, lymph and synovial fluid.

The protein localises to the secreted. It localises to the extracellular space. The protein resides in the golgi apparatus. It is found in the trans-Golgi network. It carries out the reaction 2 superoxide + 2 H(+) = H2O2 + O2. In terms of biological role, protect the extracellular space from toxic effect of reactive oxygen intermediates by converting superoxide radicals into hydrogen peroxide and oxygen. The polypeptide is Extracellular superoxide dismutase [Cu-Zn] (SOD3) (Homo sapiens (Human)).